A 20-amino-acid chain; its full sequence is Venom protease (20 aa).

Belongs to the peptidase S1 family. Post-translationally, contains 3 disulfide bonds. In terms of processing, N-glycosylated. As to expression, expressed by the venom duct.

The protein localises to the secreted. This is Venom protease from Bombus terrestris (Buff-tailed bumblebee).